Here is a 704-residue protein sequence, read N- to C-terminus: Polyribonucleotide nucleotidyltransferase (704 aa).

Aspartate 485 and aspartate 491 together coordinate Mg(2+). A KH domain is found at 552 to 611 (PRIYTMKIDPKKIKDVIGKGGATIRALTEETGTSIDIDDDGTVKIAAVDGNAVKTVMARI). The S1 motif domain occupies 621-689 (GAVYTGKVTR…RQGRIRLTMR (69 aa)).

It belongs to the polyribonucleotide nucleotidyltransferase family. Component of the RNA degradosome, which is a multiprotein complex involved in RNA processing and mRNA degradation. Mg(2+) serves as cofactor.

Its subcellular location is the cytoplasm. It carries out the reaction RNA(n+1) + phosphate = RNA(n) + a ribonucleoside 5'-diphosphate. In terms of biological role, involved in mRNA degradation. Catalyzes the phosphorolysis of single-stranded polyribonucleotides processively in the 3'- to 5'-direction. The protein is Polyribonucleotide nucleotidyltransferase of Mannheimia succiniciproducens (strain KCTC 0769BP / MBEL55E).